A 471-amino-acid polypeptide reads, in one-letter code: Probable pyruvate, phosphate dikinase regulatory protein, chloroplastic (471 aa).

The N-terminal 49 residues, 1-49 (MSSSSSTSPRFGSMISAKLASPPPSLLLPPSPRLQGRRLTPPSCTPGTP), are a transit peptide targeting the chloroplast. Residues 1–133 (MSSSSSTSPR…PHPSSDEAAS (133 aa)) are disordered. The segment covering 21–32 (SPPPSLLLPPSP) has biased composition (pro residues). Residues 71–88 (GSATTPRSPAQLGSSQLH) show a composition bias toward polar residues. Over residues 89-99 (RWSRARAHRSG) the composition is skewed to basic residues. A compositionally biased stretch (basic and acidic residues) spans 100 to 111 (RRLEWPTIRDRG). 171-178 (HSVNAALG) serves as a coordination point for ADP.

Belongs to the pyruvate, phosphate/water dikinase regulatory protein family. PDRP subfamily.

It localises to the plastid. The protein localises to the chloroplast. It catalyses the reaction N(tele)-phospho-L-histidyl/L-threonyl-[pyruvate, phosphate dikinase] + ADP = N(tele)-phospho-L-histidyl/O-phospho-L-threonyl-[pyruvate, phosphate dikinase] + AMP + H(+). The catalysed reaction is N(tele)-phospho-L-histidyl/O-phospho-L-threonyl-[pyruvate, phosphate dikinase] + phosphate + H(+) = N(tele)-phospho-L-histidyl/L-threonyl-[pyruvate, phosphate dikinase] + diphosphate. Regulated by light/dark exposure. Functionally, bifunctional serine/threonine kinase and phosphorylase involved in the dark/light-mediated regulation of PPDK by catalyzing its phosphorylation/dephosphorylation. Dark/light-induced changes in stromal concentrations of the competing ADP and Pi substrates govern the direction of the reaction. In the dark, phosphorylates the catalytic intermediate of PPDK (PPDK-HisP), inactivating it. Light exposure induces the phosphorolysis reaction that reactivates PPDK. In Oryza sativa subsp. indica (Rice), this protein is Probable pyruvate, phosphate dikinase regulatory protein, chloroplastic (PDRP1).